The sequence spans 261 residues: Triosephosphate isomerase (261 aa).

Position 10–12 (10–12 (NWK)) interacts with substrate. The active-site Electrophile is H100. The active-site Proton acceptor is the E172. Substrate-binding positions include G178, S218, and 239–240 (GG).

The protein belongs to the triosephosphate isomerase family. Homodimer.

It localises to the cytoplasm. It carries out the reaction D-glyceraldehyde 3-phosphate = dihydroxyacetone phosphate. It functions in the pathway carbohydrate biosynthesis; gluconeogenesis. It participates in carbohydrate degradation; glycolysis; D-glyceraldehyde 3-phosphate from glycerone phosphate: step 1/1. Functionally, involved in the gluconeogenesis. Catalyzes stereospecifically the conversion of dihydroxyacetone phosphate (DHAP) to D-glyceraldehyde-3-phosphate (G3P). The protein is Triosephosphate isomerase of Mycolicibacterium vanbaalenii (strain DSM 7251 / JCM 13017 / BCRC 16820 / KCTC 9966 / NRRL B-24157 / PYR-1) (Mycobacterium vanbaalenii).